Here is a 221-residue protein sequence, read N- to C-terminus: UPF0502 protein VSAL_II0605 (221 aa).

Belongs to the UPF0502 family.

In Aliivibrio salmonicida (strain LFI1238) (Vibrio salmonicida (strain LFI1238)), this protein is UPF0502 protein VSAL_II0605.